The following is a 999-amino-acid chain: Probable K(+)/H(+) antiporter subunit A/B (999 aa).

Positions 1–20 (MTRPASVLAGPKSRPPIHSQ) are disordered. The next 24 membrane-spanning stretches (helical) occupy residues 31–48 (LLSVFILVPFAGSLIAIF), 63–85 (AIALVCFLVTAGLYPYVASGGVL), 106–128 (FAWLFSALITAIGVLVALYARYY), 138–160 (FFALFLAFMGSMLGVVLSGNLIL), 162–181 (AVFWELTSIVSFLLIGYWHH), 191–213 (MALTITGTGGLAMFVGLIIIGKI), 233–255 (PLYGTVLVLVLLGALTKSAQFPF), 270–292 (SAYLHSATMVKAGVFLLVRFWPV), 299–321 (WFWIVGLAGLTTLLLGAYFAIFQ), 336–358 (LGLITVLLSLGSPLAAVAAVFHI), 389–411 (GLFHFMPITATLAMVASAAMAGV), 442–464 (YVATIAGMFAVTYSLRFIHGVFF), 488–510 (FLVLACLVVGIIPAQTIGPFLHT), 530–552 (GWNIPLIMSFVALSGGIGLYFLM), 604–621 (RLLVFLALAAGASPLLLG), 636–653 (AFALLWAIGIACAIGSAY), 660–682 (LASLVLLGGAGLVTCITFVWLSA), 686–708 (AVTQLLVEIVTTVLILLGLRWLP), 729–751 (LRDLLLAIGAGGGMMLIAYTVMT), 788–807 (TLGEIAVLCIVALTVFALLL), 846–868 (FIPAVIMRWMFPVTGMLAAFLFL), 878–900 (FAAGIAMSIGFILQYMSGGTRWV), 913–935 (SIGLLVATATGVGSWFFGYPFLT), and 955–977 (ILFDLGVFSLVLGATVLILIALA).

This sequence in the N-terminal section; belongs to the CPA3 antiporters (TC 2.A.63) subunit A family. In the C-terminal section; belongs to the CPA3 antiporters (TC 2.A.63) subunit B family. May form a heterooligomeric complex that consists of six subunits: PhaAB, PhaC, PhaD, PhaE, PhaF and PhaG.

The protein localises to the cell membrane. In terms of biological role, part of a K(+) efflux system which is required for the adaptation of R.meliloti to alkaline pH as well as for the infection process during symbiotic nodule development. The protein is Probable K(+)/H(+) antiporter subunit A/B (phaAB) of Rhizobium meliloti (strain 1021) (Ensifer meliloti).